The chain runs to 347 residues: Probable ribonucleotide transport ATP-binding protein mkl (347 aa).

Positions 16 to 252 (IEVKGLTKSF…DEPVVRQFLN (237 aa)) constitute an ABC transporter domain. 48 to 55 (GPSGTGKS) provides a ligand contact to ATP.

Belongs to the ABC transporter superfamily.

Not known, could be involved in the transport of ribonucleotides. This chain is Probable ribonucleotide transport ATP-binding protein mkl (mkl), found in Mycobacterium leprae (strain TN).